The following is a 249-amino-acid chain: Ribitol 2-dehydrogenase (249 aa).

Residue 20 to 43 (TGAASGIGLECARTLLGAGAKVVL) coordinates NAD(+). Tyr-160 functions as the Proton acceptor in the catalytic mechanism.

The protein belongs to the short-chain dehydrogenases/reductases (SDR) family. Homotetramer.

It catalyses the reaction ribitol + NAD(+) = D-ribulose + NADH + H(+). This is Ribitol 2-dehydrogenase (rbtD) from Klebsiella aerogenes (Enterobacter aerogenes).